The sequence spans 305 residues: Ribosomal RNA small subunit methyltransferase H (305 aa).

Residues 30-32 (GGH), Asp49, Phe74, Asp96, and Gln103 each bind S-adenosyl-L-methionine.

Belongs to the methyltransferase superfamily. RsmH family.

Its subcellular location is the cytoplasm. It catalyses the reaction cytidine(1402) in 16S rRNA + S-adenosyl-L-methionine = N(4)-methylcytidine(1402) in 16S rRNA + S-adenosyl-L-homocysteine + H(+). Specifically methylates the N4 position of cytidine in position 1402 (C1402) of 16S rRNA. This chain is Ribosomal RNA small subunit methyltransferase H, found in Francisella tularensis subsp. holarctica (strain LVS).